Consider the following 103-residue polypeptide: MEYVAAYVMFDKVGKELNERSMTELFNEIGAEIEPETMRLFLSKVSGKSMDEVMSKGKELMASLAISSSQKSEPAQPADTAESTQATENKEEEDEDFDIFAAF.

Residues 64-103 (LAISSSQKSEPAQPADTAESTQATENKEEEDEDFDIFAAF) form a disordered region. A compositionally biased stretch (acidic residues) spans 90 to 103 (KEEEDEDFDIFAAF).

It belongs to the eukaryotic ribosomal protein P1/P2 family. In terms of assembly, component of the large ribosomal subunit.

The protein resides in the cytoplasm. In terms of biological role, plays an important role in the elongation step of protein synthesis. The protein is Large ribosomal subunit protein P2 (RPP2A) of Encephalitozoon cuniculi (strain GB-M1) (Microsporidian parasite).